We begin with the raw amino-acid sequence, 349 residues long: 4-hydroxythreonine-4-phosphate dehydrogenase (349 aa).

Position 136 (T136) interacts with substrate. A divalent metal cation is bound by residues H171, H216, and H281. Substrate contacts are provided by K289, N298, and R307.

Belongs to the PdxA family. In terms of assembly, homodimer. A divalent metal cation is required as a cofactor.

The protein resides in the cytoplasm. It catalyses the reaction 4-(phosphooxy)-L-threonine + NAD(+) = 3-amino-2-oxopropyl phosphate + CO2 + NADH. It participates in cofactor biosynthesis; pyridoxine 5'-phosphate biosynthesis; pyridoxine 5'-phosphate from D-erythrose 4-phosphate: step 4/5. Catalyzes the NAD(P)-dependent oxidation of 4-(phosphooxy)-L-threonine (HTP) into 2-amino-3-oxo-4-(phosphooxy)butyric acid which spontaneously decarboxylates to form 3-amino-2-oxopropyl phosphate (AHAP). The chain is 4-hydroxythreonine-4-phosphate dehydrogenase from Synechocystis sp. (strain ATCC 27184 / PCC 6803 / Kazusa).